Here is a 930-residue protein sequence, read N- to C-terminus: Translation initiation factor IF-2 (930 aa).

A compositionally biased stretch (low complexity) spans 50-67 (FKPAAAPKVEAKPAAPKV). Disordered regions lie at residues 50–196 (FKPA…RIDF) and 260–346 (EVVP…HELP). Composition is skewed to basic and acidic residues over residues 68 to 90 (SAEK…EAKP) and 110 to 125 (FKAE…AERR). Residues 129 to 141 (KGNNRDQQQNGNR) are compositionally biased toward low complexity. Basic and acidic residues-rich tracts occupy residues 157 to 172 (RDNR…EQGQ) and 262 to 295 (VPEK…DGPR). A compositionally biased stretch (low complexity) spans 309–318 (NQKNSNWNNN). Basic and acidic residues predominate over residues 337–346 (VTERKFHELP). A tr-type G domain is found at 432-599 (ERPPVVTIMG…TVLLVAEIQE (168 aa)). Positions 441–448 (GHVDHGKT) are G1. 441–448 (GHVDHGKT) provides a ligand contact to GTP. The segment at 466 to 470 (GITQH) is G2. The G3 stretch occupies residues 487 to 490 (DTPG). GTP contacts are provided by residues 487–491 (DTPGH) and 541–544 (NKID). The tract at residues 541-544 (NKID) is G4. Residues 577–579 (SAK) are G5.

The protein belongs to the TRAFAC class translation factor GTPase superfamily. Classic translation factor GTPase family. IF-2 subfamily.

It is found in the cytoplasm. Functionally, one of the essential components for the initiation of protein synthesis. Protects formylmethionyl-tRNA from spontaneous hydrolysis and promotes its binding to the 30S ribosomal subunits. Also involved in the hydrolysis of GTP during the formation of the 70S ribosomal complex. This chain is Translation initiation factor IF-2, found in Streptococcus pneumoniae serotype 19F (strain G54).